The following is a 1267-amino-acid chain: BOS complex subunit NOMO2 (1267 aa).

The signal sequence occupies residues 1–31 (MLVGQGAGLLGPAVVTAAVVLLLSGVGPAHG). Residues 32-1155 (SEDIVVGCGG…NPTRKLPEQD (1124 aa)) lie on the Lumenal side of the membrane. Residues Asn50, Asn218, and Asn618 are each glycosylated (N-linked (GlcNAc...) asparagine). Residues 1156–1176 (IAQGSYIALPLTLLVLLAGYN) form a helical membrane-spanning segment. At 1177–1267 (HDKLIPLLLQ…LETTATCIHY (91 aa)) the chain is on the cytoplasmic side. The interval 1198 to 1219 (GQAASDNSGPEDAKRQAKKQKT) is disordered.

Component of the back of Sec61 (BOS) complex, composed of NCLN/Nicalin, NOMO (NOMO1, NOMO2 or NOMO3) and TMEM147. The BOS complex is part of the multi-pass translocon (MPT) complex, composed of three subcomplexes, the GEL complex (composed of RAB5IF/OPTI and TMCO1), the BOS complex (composed of NCLN/Nicalin, NOMO and TMEM147) and the PAT complex (composed of WDR83OS/Asterix and CCDC47). The MPT complex associates with the SEC61 complex. Due to the strong similarity between NOMO1, NOMO2 and NOMO3, similar interaction pattern probably occur for the three gene copies. Highly expressed in pancreas and skeletal muscle and, at lower levels, in heart.

Its subcellular location is the endoplasmic reticulum membrane. In terms of biological role, component of the multi-pass translocon (MPT) complex that mediates insertion of multi-pass membrane proteins into the lipid bilayer of membranes. The MPT complex takes over after the SEC61 complex: following membrane insertion of the first few transmembrane segments of proteins by the SEC61 complex, the MPT complex occludes the lateral gate of the SEC61 complex to promote insertion of subsequent transmembrane regions. In Homo sapiens (Human), this protein is BOS complex subunit NOMO2 (NOMO2).